A 206-amino-acid polypeptide reads, in one-letter code: Large ribosomal subunit protein uL4 (206 aa).

The segment at 63–85 is disordered; sequence MYKQKGTGSARHGSARAPQFRGG.

It belongs to the universal ribosomal protein uL4 family. Part of the 50S ribosomal subunit.

In terms of biological role, one of the primary rRNA binding proteins, this protein initially binds near the 5'-end of the 23S rRNA. It is important during the early stages of 50S assembly. It makes multiple contacts with different domains of the 23S rRNA in the assembled 50S subunit and ribosome. Its function is as follows. Forms part of the polypeptide exit tunnel. This is Large ribosomal subunit protein uL4 from Beijerinckia indica subsp. indica (strain ATCC 9039 / DSM 1715 / NCIMB 8712).